The primary structure comprises 63 residues: Translational regulator CsrA (63 aa).

Belongs to the CsrA/RsmA family. Homodimer; the beta-strands of each monomer intercalate to form a hydrophobic core, while the alpha-helices form wings that extend away from the core.

Its subcellular location is the cytoplasm. Functionally, a key translational regulator that binds mRNA to regulate translation initiation and/or mRNA stability. Mediates global changes in gene expression, shifting from rapid growth to stress survival by linking envelope stress, the stringent response and the catabolite repression systems. Usually binds in the 5'-UTR; binding at or near the Shine-Dalgarno sequence prevents ribosome-binding, repressing translation, binding elsewhere in the 5'-UTR can activate translation and/or stabilize the mRNA. Its function is antagonized by small RNA(s). This chain is Translational regulator CsrA, found in Alteromonas mediterranea (strain DSM 17117 / CIP 110805 / LMG 28347 / Deep ecotype).